Here is a 441-residue protein sequence, read N- to C-terminus: ATP-dependent protease ATPase subunit HslU (441 aa).

Residues isoleucine 17, 60 to 65 (GVGKTE), aspartate 253, glutamate 319, and arginine 391 each bind ATP.

The protein belongs to the ClpX chaperone family. HslU subfamily. A double ring-shaped homohexamer of HslV is capped on each side by a ring-shaped HslU homohexamer. The assembly of the HslU/HslV complex is dependent on binding of ATP.

The protein resides in the cytoplasm. In terms of biological role, ATPase subunit of a proteasome-like degradation complex; this subunit has chaperone activity. The binding of ATP and its subsequent hydrolysis by HslU are essential for unfolding of protein substrates subsequently hydrolyzed by HslV. HslU recognizes the N-terminal part of its protein substrates and unfolds these before they are guided to HslV for hydrolysis. This Legionella pneumophila (strain Paris) protein is ATP-dependent protease ATPase subunit HslU.